A 354-amino-acid polypeptide reads, in one-letter code: Trans-L-3-hydroxyproline dehydratase (354 aa).

Cys104 serves as the catalytic Proton acceptor. Substrate contacts are provided by residues Gly105–His106, Asp269, and Gly274–Ser275.

The protein belongs to the proline racemase family. In terms of assembly, homodimer.

The catalysed reaction is trans-3-hydroxy-L-proline = 1-pyrroline-2-carboxylate + H2O. Its function is as follows. Catalyzes the dehydration of trans-3-hydroxy-L-proline to delta-1-pyrroline-2-carboxylate (Pyr2C). The sequence is that of Trans-L-3-hydroxyproline dehydratase (L3HYPDH) from Pongo abelii (Sumatran orangutan).